The sequence spans 414 residues: uncharacterized protein (414 aa).

Belongs to the UbiH/COQ6 family. It depends on FAD as a cofactor.

This is an uncharacterized protein from Synechocystis sp. (strain ATCC 27184 / PCC 6803 / Kazusa).